The chain runs to 488 residues: Cysteine desulfurase, mitochondrial (488 aa).

A disordered region spans residues 25–52 (LPKPLATSSSPATNAPNKTSNPKTGELH). Over residues 30 to 47 (ATSSSPATNAPNKTSNPK) the composition is skewed to polar residues. Residues 157–158 (AT), N237, Q265, and 285–287 (SSH) contribute to the pyridoxal 5'-phosphate site. K288 is modified (N6-(pyridoxal phosphate)lysine). T325 contacts pyridoxal 5'-phosphate. Catalysis depends on C412, which acts as the Cysteine persulfide intermediate. Residue C412 coordinates [2Fe-2S] cluster.

The protein belongs to the class-V pyridoxal-phosphate-dependent aminotransferase family. NifS/IscS subfamily. Pyridoxal 5'-phosphate is required as a cofactor.

The protein localises to the mitochondrion. It catalyses the reaction (sulfur carrier)-H + L-cysteine = (sulfur carrier)-SH + L-alanine. In terms of biological role, catalyzes the removal of elemental sulfur from cysteine to produce alanine. It supplies the inorganic sulfur for iron-sulfur (Fe-S) clusters. Plays a role in both tRNA-processing and mitochondrial metabolism. Involved in the 2-thio-modification of both 5-carboxymethylaminomethyl-2-thiouridine in mitochondrial tRNAs and 5-methoxycarbonylmethyl-2-thiouridine (mcm5s2U) in cytoplasmic tRNAs. This is Cysteine desulfurase, mitochondrial (NFS1) from Candida albicans (strain SC5314 / ATCC MYA-2876) (Yeast).